Here is a 515-residue protein sequence, read N- to C-terminus: Maturase K (515 aa).

The protein belongs to the intron maturase 2 family. MatK subfamily.

The protein resides in the plastid. It localises to the chloroplast. Functionally, usually encoded in the trnK tRNA gene intron. Probably assists in splicing its own and other chloroplast group II introns. In Pinus cembra (Swiss stone pine), this protein is Maturase K.